We begin with the raw amino-acid sequence, 132 residues long: D-ribose pyranase (132 aa).

Residue His-20 is the Proton donor of the active site. Substrate is bound by residues Asp-28, His-99, and 121–123; that span reads YSN.

The protein belongs to the RbsD / FucU family. RbsD subfamily. In terms of assembly, homodecamer.

The protein localises to the cytoplasm. The catalysed reaction is beta-D-ribopyranose = beta-D-ribofuranose. Its pathway is carbohydrate metabolism; D-ribose degradation; D-ribose 5-phosphate from beta-D-ribopyranose: step 1/2. Its function is as follows. Catalyzes the interconversion of beta-pyran and beta-furan forms of D-ribose. This is D-ribose pyranase from Pseudomonas putida (strain GB-1).